Reading from the N-terminus, the 388-residue chain is Chaperone protein DnaJ 1 (388 aa).

Positions 10 to 74 constitute a J domain; it reads DFYKELGVSS…VKRKEYDETR (65 aa). The CR-type zinc-finger motif lies at 159–237; that stretch reads GVAMPLRLTS…CKGTGVTTRT (79 aa). 8 residues coordinate Zn(2+): C172, C175, C189, C192, C211, C214, C225, and C228. 4 CXXCXGXG motif repeats span residues 172 to 179, 189 to 196, 211 to 218, and 225 to 232; these read CTNCHGSG, CSTCNGSG, CTECRGSG, and CEECKGTG.

This sequence belongs to the DnaJ family. As to quaternary structure, homodimer. Requires Zn(2+) as cofactor.

The protein resides in the cytoplasm. Participates actively in the response to hyperosmotic and heat shock by preventing the aggregation of stress-denatured proteins and by disaggregating proteins, also in an autonomous, DnaK-independent fashion. Unfolded proteins bind initially to DnaJ; upon interaction with the DnaJ-bound protein, DnaK hydrolyzes its bound ATP, resulting in the formation of a stable complex. GrpE releases ADP from DnaK; ATP binding to DnaK triggers the release of the substrate protein, thus completing the reaction cycle. Several rounds of ATP-dependent interactions between DnaJ, DnaK and GrpE are required for fully efficient folding. Also involved, together with DnaK and GrpE, in the DNA replication of plasmids through activation of initiation proteins. In Mycobacterium leprae (strain TN), this protein is Chaperone protein DnaJ 1.